The primary structure comprises 394 residues: Muscle cell intermediate filament protein AV71 (394 aa).

The coil 1B stretch occupies residues 1 to 73 (AEINLVRRRV…RVHDQEITEL (73 aa)). The region spanning 1–239 (AEINLVRRRV…KMLEGEENRA (239 aa)) is the IF rod domain. The segment at 74–91 (QAMAARDTTPENREYFKN) is linker 12. Residues 92–239 (ELSSAIRDIR…KMLEGEENRA (148 aa)) form a coil 2 region. Residues 240–394 (GLRQLVEQVV…HIQRSSHTIN (155 aa)) form a tail region. One can recognise an LTD domain in the interval 272–389 (SRTSFQRSAK…EERASHIQRS (118 aa)).

This sequence belongs to the intermediate filament family.

This is Muscle cell intermediate filament protein AV71 (AV71) from Acanthocheilonema viteae (Filarial nematode worm).